The chain runs to 239 residues: EF-hand domain-containing protein D1 (239 aa).

Residues 1–18 (MASEELACKLERRLRREE) show a composition bias toward basic and acidic residues. Residues 1–53 (MASEELACKLERRLRREEAEESGPQLAPLGAPAPEPKPEPEPPARAPTASADA) are disordered. 2 EF-hand domains span residues 90–125 (RLIK…LGAP) and 126–161 (QTHL…AAAG). The Ca(2+) site is built by aspartate 103, aspartate 107, glutamate 114, aspartate 139, aspartate 141, aspartate 143, lysine 145, and glutamate 150. Residue serine 201 is modified to Phosphoserine.

Its subcellular location is the mitochondrion inner membrane. In terms of biological role, acts as a calcium sensor for mitochondrial flash (mitoflash) activation, an event characterized by stochastic bursts of superoxide production. May play a role in neuronal differentiation. This Homo sapiens (Human) protein is EF-hand domain-containing protein D1 (EFHD1).